Consider the following 716-residue polypeptide: Protein C-mannosyl-transferase DPY19L3 (716 aa).

Over 1–43 (MMYIRQRKETKPIEVSEDFPSPKEDVKLEKKLPSGCASGRFWK) the chain is Cytoplasmic. Residues 44–64 (ILSSAVGGTVALCIGLLTSVY) form a helical membrane-spanning segment. The Lumenal portion of the chain corresponds to 65–154 (LATLHENDLW…RVLPIQKYLE (90 aa)). Asparagine 118 is a glycosylation site (N-linked (GlcNAc...) asparagine). Residues 155-182 (PVYFYIYTLFGLQAVYVTALYITSWLLS) form a helical membrane-spanning segment. Over 183–184 (GT) the chain is Cytoplasmic. Residues 185 to 197 (WLSGLLAALWYVT) constitute an intramembrane region (name=3). Residues 198 to 215 (NRIDTTRVEFTIPLRENW) lie on the Cytoplasmic side of the membrane. The segment at residues 216 to 230 (ALPFFAIQIAAITYF) is an intramembrane region (name=4). At 231 to 239 (LRPNLQPLS) the chain is on the cytoplasmic side. The chain crosses the membrane as a helical span at residues 240-256 (ERLTLLAIFVSTFLFSL). At 257 to 262 (TWQFNQ) the chain is on the lumenal side. A helical transmembrane segment spans residues 263–279 (FMMLLQALVLFILDSLD). Residues 280-289 (MLPAMKATWL) lie on the Cytoplasmic side of the membrane. A helical membrane pass occupies residues 290 to 306 (YGIQISCLLLVCTLQFF). Topologically, residues 307–308 (NS) are lumenal. A helical membrane pass occupies residues 309-323 (MILGSLLISFNLSVL). Topologically, residues 324–338 (IVRKLQKNLKTGSFL) are cytoplasmic. The chain crosses the membrane as a helical span at residues 339–359 (TRIWKLLLHLLLVFCLTLFLN). The Lumenal portion of the chain corresponds to 360-414 (NIIKKVLNLKSDEHIFKFLKAKFGFGATRDFDANLYLCEEAFGLLPLNTFQRLSE). Residues 415-437 (TLLFYAYMFVLVVTVVTASVVAF) traverse the membrane as a helical segment. The Cytoplasmic segment spans residues 438-465 (HNLSDSTSLKSMDQTRKRAVDLKPEAAY). A helical membrane pass occupies residues 466–485 (NLIHTILFGVLALSTMRMKY). Topologically, residues 486–487 (LW) are lumenal. A helical membrane pass occupies residues 488 to 499 (TSHMCVFASFGL). The Cytoplasmic segment spans residues 500–522 (CSSEVWELLLRLVHLCNPKRIWV). Residues 523–539 (LRYLVPVLTLLYLCYKS) traverse the membrane as a helical segment. Over 540–716 (WPGVMDELSE…FHVYKLSRNK (177 aa)) the chain is Lumenal. Asparagine 704 carries an N-linked (GlcNAc...) asparagine glycan.

It belongs to the dpy-19 family.

It localises to the endoplasmic reticulum membrane. It catalyses the reaction L-tryptophyl-[protein] + a di-trans,poly-cis-dolichyl beta-D-mannosyl phosphate = C-alpha-D-mannosyl-L-tryptophyl-[protein] + a di-trans,poly-cis-dolichyl phosphate + H(+). The protein operates within protein modification; protein glycosylation. In terms of biological role, C-mannosyltransferase that mediates C-mannosylation of tryptophan residues on target proteins. The reaction occurs on the luminal side of the endoplasmic reticulum and involves the transfer of a mannose unit from a dolichylphosphate mannose (Dol-P-Man) donor to an acceptor protein containing a WxxW or WxxC consensus sequence. C-mannosylates RSPO1, a Wnt signaling regulator, preferentially at the first Trp residue in the sequence WxxW. C-mannosylates the netrin receptor UNC5A, preferentially at the third tryptophan of WxxWxxWxxC sequence. The chain is Protein C-mannosyl-transferase DPY19L3 (Dpy19l3) from Mus musculus (Mouse).